The chain runs to 69 residues: Cytochrome c oxidase subunit 8A, mitochondrial (69 aa).

Residues M1–Q25 constitute a mitochondrion transit peptide. An SIFI-degron motif is present at residues S2 to L19. The Mitochondrial matrix portion of the chain corresponds to V26–G36. A helical membrane pass occupies residues T37 to S60. Residues H61–E69 are Mitochondrial intermembrane-facing.

It belongs to the cytochrome c oxidase VIII family. As to quaternary structure, component of the cytochrome c oxidase (complex IV, CIV), a multisubunit enzyme composed of 14 subunits. The complex is composed of a catalytic core of 3 subunits MT-CO1, MT-CO2 and MT-CO3, encoded in the mitochondrial DNA, and 11 supernumerary subunits COX4I, COX5A, COX5B, COX6A, COX6B, COX6C, COX7A, COX7B, COX7C, COX8 and NDUFA4, which are encoded in the nuclear genome. The complex exists as a monomer or a dimer and forms supercomplexes (SCs) in the inner mitochondrial membrane with NADH-ubiquinone oxidoreductase (complex I, CI) and ubiquinol-cytochrome c oxidoreductase (cytochrome b-c1 complex, complex III, CIII), resulting in different assemblies (supercomplex SCI(1)III(2)IV(1) and megacomplex MCI(2)III(2)IV(2)). Post-translationally, in response to mitochondrial stress, the precursor protein is ubiquitinated by the SIFI complex in the cytoplasm before mitochondrial import, leading to its degradation. Within the SIFI complex, UBR4 initiates ubiquitin chain that are further elongated or branched by KCMF1.

It is found in the mitochondrion inner membrane. It functions in the pathway energy metabolism; oxidative phosphorylation. Component of the cytochrome c oxidase, the last enzyme in the mitochondrial electron transport chain which drives oxidative phosphorylation. The respiratory chain contains 3 multisubunit complexes succinate dehydrogenase (complex II, CII), ubiquinol-cytochrome c oxidoreductase (cytochrome b-c1 complex, complex III, CIII) and cytochrome c oxidase (complex IV, CIV), that cooperate to transfer electrons derived from NADH and succinate to molecular oxygen, creating an electrochemical gradient over the inner membrane that drives transmembrane transport and the ATP synthase. Cytochrome c oxidase is the component of the respiratory chain that catalyzes the reduction of oxygen to water. Electrons originating from reduced cytochrome c in the intermembrane space (IMS) are transferred via the dinuclear copper A center (CU(A)) of subunit 2 and heme A of subunit 1 to the active site in subunit 1, a binuclear center (BNC) formed by heme A3 and copper B (CU(B)). The BNC reduces molecular oxygen to 2 water molecules using 4 electrons from cytochrome c in the IMS and 4 protons from the mitochondrial matrix. The protein is Cytochrome c oxidase subunit 8A, mitochondrial (COX8A) of Eulemur fulvus fulvus (Brown lemur).